Consider the following 443-residue polypeptide: uncharacterized protein (443 aa).

The next 10 helical transmembrane spans lie at 7 to 29 (VSLYISFVLIICALSKNIMMLNT), 68 to 87 (YISSYSYILYTYVLFISIFT), 94 to 111 (VLSLFLKVIYIYSLYAIF), 121 to 143 (VTLFTFFILAFLMCSSSTLSMFA), 150 to 164 (IVIIFLPFLVYSLTC), 179 to 201 (IISTAKNQFILTPLIVYSYYIFF), 206 to 225 (LIIKSVICVVCLLASIFAIS), 358 to 375 (IRFISLLLFFIASIFIRN), 382 to 399 (LFVVSLFGISQFYVSFFG), and 409 to 431 (LFGMYFSFDLCLYITVVFLIYKI).

The protein localises to the cell membrane. This is an uncharacterized protein from Escherichia coli (strain K12).